Reading from the N-terminus, the 328-residue chain is D-cysteine desulfhydrase (328 aa).

Lys51 carries the post-translational modification N6-(pyridoxal phosphate)lysine.

This sequence belongs to the ACC deaminase/D-cysteine desulfhydrase family. In terms of assembly, homodimer. The cofactor is pyridoxal 5'-phosphate.

The enzyme catalyses D-cysteine + H2O = hydrogen sulfide + pyruvate + NH4(+) + H(+). Functionally, catalyzes the alpha,beta-elimination reaction of D-cysteine and of several D-cysteine derivatives. It could be a defense mechanism against D-cysteine. This Shigella boydii serotype 18 (strain CDC 3083-94 / BS512) protein is D-cysteine desulfhydrase.